Consider the following 92-residue polypeptide: Probable Fe(2+)-trafficking protein (92 aa).

Belongs to the Fe(2+)-trafficking protein family.

Functionally, could be a mediator in iron transactions between iron acquisition and iron-requiring processes, such as synthesis and/or repair of Fe-S clusters in biosynthetic enzymes. In Shewanella piezotolerans (strain WP3 / JCM 13877), this protein is Probable Fe(2+)-trafficking protein.